A 373-amino-acid chain; its full sequence is 3-isopropylmalate dehydrogenase (373 aa).

82-93 (GPKWGTGTVRPE) is a binding site for NAD(+). The substrate site is built by arginine 100, arginine 110, arginine 139, and aspartate 231. Mg(2+) is bound by residues aspartate 231, aspartate 256, and aspartate 260. Position 295 to 306 (295 to 306 (GSAPDLPANKVN)) interacts with NAD(+).

Belongs to the isocitrate and isopropylmalate dehydrogenases family. As to quaternary structure, homodimer. It depends on Mg(2+) as a cofactor. Requires Mn(2+) as cofactor.

The protein resides in the cytoplasm. It carries out the reaction (2R,3S)-3-isopropylmalate + NAD(+) = 4-methyl-2-oxopentanoate + CO2 + NADH. It participates in amino-acid biosynthesis; L-leucine biosynthesis; L-leucine from 3-methyl-2-oxobutanoate: step 3/4. Catalyzes the oxidation of 3-carboxy-2-hydroxy-4-methylpentanoate (3-isopropylmalate) to 3-carboxy-4-methyl-2-oxopentanoate. The product decarboxylates to 4-methyl-2 oxopentanoate. This Candida albicans (Yeast) protein is 3-isopropylmalate dehydrogenase (LEU2).